Here is a 200-residue protein sequence, read N- to C-terminus: MTDKLATLKAALEKALGNRVQSLTESVGELTLVVKAADYLDAMRTLRDDASLKFEQLMDLCGVDYADYGDGAWNGPRFAAVSHLLSITHNWRVRVRVFAPDDDLPVVSSVTTIWNSADWFEREAFDLYGLVFEGHPDLRRILTDYGFIGHPFRKDFPVSGYVEMRYDPVQRRVVYQPVTIEPREITPRVIREDQYGGLKH.

This sequence belongs to the complex I 30 kDa subunit family. As to quaternary structure, NDH-1 is composed of 14 different subunits. Subunits NuoB, C, D, E, F, and G constitute the peripheral sector of the complex.

It is found in the cell inner membrane. The enzyme catalyses a quinone + NADH + 5 H(+)(in) = a quinol + NAD(+) + 4 H(+)(out). Its function is as follows. NDH-1 shuttles electrons from NADH, via FMN and iron-sulfur (Fe-S) centers, to quinones in the respiratory chain. The immediate electron acceptor for the enzyme in this species is believed to be ubiquinone. Couples the redox reaction to proton translocation (for every two electrons transferred, four hydrogen ions are translocated across the cytoplasmic membrane), and thus conserves the redox energy in a proton gradient. The protein is NADH-quinone oxidoreductase subunit C of Ralstonia pickettii (strain 12J).